The sequence spans 350 residues: Biotin synthase (350 aa).

One can recognise a Radical SAM core domain in the interval 41–268; the sequence is NEVQISRLLS…LSRVRLSAGR (228 aa). [4Fe-4S] cluster-binding residues include C56, C60, and C63. [2Fe-2S] cluster is bound by residues C100, C131, C191, and R263.

Belongs to the radical SAM superfamily. Biotin synthase family. As to quaternary structure, homodimer. [4Fe-4S] cluster serves as cofactor. The cofactor is [2Fe-2S] cluster.

The catalysed reaction is (4R,5S)-dethiobiotin + (sulfur carrier)-SH + 2 reduced [2Fe-2S]-[ferredoxin] + 2 S-adenosyl-L-methionine = (sulfur carrier)-H + biotin + 2 5'-deoxyadenosine + 2 L-methionine + 2 oxidized [2Fe-2S]-[ferredoxin]. The protein operates within cofactor biosynthesis; biotin biosynthesis; biotin from 7,8-diaminononanoate: step 2/2. Functionally, catalyzes the conversion of dethiobiotin (DTB) to biotin by the insertion of a sulfur atom into dethiobiotin via a radical-based mechanism. The chain is Biotin synthase from Shewanella baltica (strain OS223).